We begin with the raw amino-acid sequence, 386 residues long: 1-deoxy-D-xylulose 5-phosphate reductoisomerase (386 aa).

7 residues coordinate NADPH: T10, G11, S12, I13, G36, N38, and N122. K123 contacts 1-deoxy-D-xylulose 5-phosphate. NADPH is bound at residue E124. D148 is a Mn(2+) binding site. Residues S149, E150, S174, and H197 each contribute to the 1-deoxy-D-xylulose 5-phosphate site. E150 is a binding site for Mn(2+). An NADPH-binding site is contributed by G203. 1-deoxy-D-xylulose 5-phosphate contacts are provided by S210, N215, K216, and E219. E219 lines the Mn(2+) pocket.

It belongs to the DXR family. Mg(2+) is required as a cofactor. The cofactor is Mn(2+).

It catalyses the reaction 2-C-methyl-D-erythritol 4-phosphate + NADP(+) = 1-deoxy-D-xylulose 5-phosphate + NADPH + H(+). It functions in the pathway isoprenoid biosynthesis; isopentenyl diphosphate biosynthesis via DXP pathway; isopentenyl diphosphate from 1-deoxy-D-xylulose 5-phosphate: step 1/6. In terms of biological role, catalyzes the NADPH-dependent rearrangement and reduction of 1-deoxy-D-xylulose-5-phosphate (DXP) to 2-C-methyl-D-erythritol 4-phosphate (MEP). This is 1-deoxy-D-xylulose 5-phosphate reductoisomerase from Geotalea uraniireducens (strain Rf4) (Geobacter uraniireducens).